Reading from the N-terminus, the 296-residue chain is Phosphatidylglycerol--prolipoprotein diacylglyceryl transferase (296 aa).

Transmembrane regions (helical) follow at residues 10-30 (IAFS…LAAF), 57-77 (LLFY…MLFY), 92-112 (VWEG…ACWL), and 119-139 (LHFF…LGFG). Position 140 (arginine 140) interacts with a 1,2-diacyl-sn-glycero-3-phospho-(1'-sn-glycerol). 3 helical membrane passes run 194–214 (QLYE…TFSM), 220–240 (YAVS…VEFV), and 254–274 (WLTM…VLLA).

This sequence belongs to the Lgt family.

It is found in the cell inner membrane. The enzyme catalyses L-cysteinyl-[prolipoprotein] + a 1,2-diacyl-sn-glycero-3-phospho-(1'-sn-glycerol) = an S-1,2-diacyl-sn-glyceryl-L-cysteinyl-[prolipoprotein] + sn-glycerol 1-phosphate + H(+). The protein operates within protein modification; lipoprotein biosynthesis (diacylglyceryl transfer). Its function is as follows. Catalyzes the transfer of the diacylglyceryl group from phosphatidylglycerol to the sulfhydryl group of the N-terminal cysteine of a prolipoprotein, the first step in the formation of mature lipoproteins. The chain is Phosphatidylglycerol--prolipoprotein diacylglyceryl transferase from Xanthomonas axonopodis pv. citri (strain 306).